The primary structure comprises 855 residues: Probable inactive ATP-dependent zinc metalloprotease FTSHI 4, chloroplastic (855 aa).

Residues 1 to 78 constitute a chloroplast transit peptide; the sequence is MTFYISSSLT…SFESTESSVS (78 aa). The helical transmembrane segment at 242 to 262 threads the bilayer; that stretch reads VATFVVWSMRLALFVSLYVWI. 356 to 363 lines the ATP pocket; sequence GPPGTGKT.

This sequence belongs to the AAA ATPase family. As to quaternary structure, homooligomer. Interacts with FtsHi2. As to expression, ubiquitous but preferentially expressed in young leaves.

It localises to the plastid. The protein resides in the chloroplast thylakoid membrane. Its function is as follows. Functions in chloroplast biogenesis and chloroplast division. Required for plastid development during embryogenesis. Might be involved in chaperone functions or play a structural role in the thylakoid FtsH complex. The chain is Probable inactive ATP-dependent zinc metalloprotease FTSHI 4, chloroplastic from Arabidopsis thaliana (Mouse-ear cress).